The sequence spans 372 residues: Enoyl-[acyl-carrier-protein] reductase, mitochondrial (372 aa).

The N-terminal 18 residues, 1-18, are a transit peptide targeting the mitochondrion; that stretch reads MSFFKTAVRRFSSTSITR. Tyr72 serves as the catalytic Proton donor. Residues Asn157, 183–186, 206–208, 279–282, 304–306, and Lys365 each bind NADP(+); these read NSMV, RNR, FGGM, and FWV.

Belongs to the zinc-containing alcohol dehydrogenase family. Quinone oxidoreductase subfamily. Homodimer.

Its subcellular location is the mitochondrion matrix. It carries out the reaction a 2,3-saturated acyl-[ACP] + NADP(+) = a (2E)-enoyl-[ACP] + NADPH + H(+). Catalyzes the NADPH-dependent reduction of trans-2-enoyl thioesters in mitochondrial fatty acid synthesis (fatty acid synthesis type II). Fatty acid chain elongation in mitochondria uses acyl carrier protein (ACP) as an acyl group carrier, but the enzyme accepts both ACP and CoA thioesters as substrates in vitro. Required for respiration and the maintenance of the mitochondrial compartment. The sequence is that of Enoyl-[acyl-carrier-protein] reductase, mitochondrial (etr1) from Schizosaccharomyces pombe (strain 972 / ATCC 24843) (Fission yeast).